Consider the following 348-residue polypeptide: Protein RecA (348 aa).

64–71 is a binding site for ATP; it reads GPESSGKT. The segment at 328 to 348 is disordered; sequence DTGGAAPAQEDEAQAQEELEF. Positions 336 to 348 are enriched in acidic residues; the sequence is QEDEAQAQEELEF.

Belongs to the RecA family.

The protein localises to the cytoplasm. Its function is as follows. Can catalyze the hydrolysis of ATP in the presence of single-stranded DNA, the ATP-dependent uptake of single-stranded DNA by duplex DNA, and the ATP-dependent hybridization of homologous single-stranded DNAs. It interacts with LexA causing its activation and leading to its autocatalytic cleavage. The protein is Protein RecA of Bacillus licheniformis (strain ATCC 14580 / DSM 13 / JCM 2505 / CCUG 7422 / NBRC 12200 / NCIMB 9375 / NCTC 10341 / NRRL NRS-1264 / Gibson 46).